Reading from the N-terminus, the 662-residue chain is Primary amine oxidase 2 (662 aa).

The signal sequence occupies residues 1–22 (MSQLLLFTILVFSSVFVIGSLS). Residue Asn154 is glycosylated (N-linked (GlcNAc...) asparagine). 321 to 332 (FFDCGEFGCGQY) provides a ligand contact to substrate. The active-site Proton acceptor is Asp323. Residues Cys342 and Cys368 are joined by a disulfide bond. A substrate-binding site is contributed by 405–410 (VGNYDY). The Schiff-base intermediate with substrate; via topaquinone role is filled by Tyr408. Tyr408 bears the 2',4',5'-topaquinone mark. Cu cation is bound by residues His464 and His466. Mn(2+) is bound by residues Asp473 and Asp475. An N-linked (GlcNAc...) asparagine glycan is attached at Asn568. Positions 602 and 603 each coordinate Mn(2+). His613 provides a ligand contact to Cu cation.

It belongs to the copper/topaquinone oxidase family. Homodimer. Cu cation serves as cofactor. Requires Mn(2+) as cofactor. L-topaquinone is required as a cofactor. Post-translationally, topaquinone (TPQ) is generated by copper-dependent autoxidation of a specific tyrosyl residue.

It catalyses the reaction a primary methyl amine + O2 + H2O = an aldehyde + H2O2 + NH4(+). This Arabidopsis thaliana (Mouse-ear cress) protein is Primary amine oxidase 2.